The primary structure comprises 448 residues: Trigger factor (448 aa).

In terms of domain architecture, PPIase FKBP-type spans 163 to 248 (GDIVVIDFDG…VKDIRVPKAA (86 aa)).

Belongs to the FKBP-type PPIase family. Tig subfamily.

It localises to the cytoplasm. It carries out the reaction [protein]-peptidylproline (omega=180) = [protein]-peptidylproline (omega=0). Functionally, involved in protein export. Acts as a chaperone by maintaining the newly synthesized protein in an open conformation. Functions as a peptidyl-prolyl cis-trans isomerase. This chain is Trigger factor, found in Rhodospirillum centenum (strain ATCC 51521 / SW).